Consider the following 405-residue polypeptide: 5-azacytidine-induced protein 2 (405 aa).

The tract at residues methionine 1 to glycine 198 is homodimerization. Residues alanine 40 to threonine 197 adopt a coiled-coil conformation. The segment at serine 229 to cysteine 270 is interaction with TBK1 and IKBKE. Phosphoserine occurs at positions 331 and 366. Positions leucine 357 to glutamate 377 are disordered.

Homodimer. Interacts with IKBKE and TBK1. Interacts with TICAM1. Interacts with TAX1BP1. Interacts with CALCOCO2. Ubiquitinated via 'Lys-48'-linked polyubiquitination by TRIM38, leading to its degradation. As to expression, testis, ovary, heart, lung, kidney and brain. Expressed mainly in the spermatocytes or spermatids in the testis.

It localises to the cytoplasm. Adapter protein which binds TBK1 and IKBKE playing a role in antiviral innate immunity. Activates serine/threonine-protein kinase TBK1 and facilitates its oligomerization. Enhances the phosphorylation of NF-kappa-B p65 subunit RELA by TBK1. Promotes TBK1-induced as well as TNF-alpha or PMA-induced activation of NF-kappa-B. Participates in IFNB promoter activation via TICAM1. This is 5-azacytidine-induced protein 2 (Azi2) from Mus musculus (Mouse).